The following is a 141-amino-acid chain: Nucleoside diphosphate kinase (141 aa).

The ATP site is built by lysine 11, phenylalanine 59, arginine 87, threonine 93, arginine 104, and asparagine 114. Residue histidine 117 is the Pros-phosphohistidine intermediate of the active site.

The protein belongs to the NDK family. Homotetramer. The cofactor is Mg(2+).

The protein resides in the cytoplasm. It catalyses the reaction a 2'-deoxyribonucleoside 5'-diphosphate + ATP = a 2'-deoxyribonucleoside 5'-triphosphate + ADP. It carries out the reaction a ribonucleoside 5'-diphosphate + ATP = a ribonucleoside 5'-triphosphate + ADP. Major role in the synthesis of nucleoside triphosphates other than ATP. The ATP gamma phosphate is transferred to the NDP beta phosphate via a ping-pong mechanism, using a phosphorylated active-site intermediate. The chain is Nucleoside diphosphate kinase from Pseudomonas syringae pv. tomato (strain ATCC BAA-871 / DC3000).